The chain runs to 195 residues: Probable nicotinate-nucleotide adenylyltransferase (195 aa).

The protein belongs to the NadD family.

The catalysed reaction is nicotinate beta-D-ribonucleotide + ATP + H(+) = deamido-NAD(+) + diphosphate. It participates in cofactor biosynthesis; NAD(+) biosynthesis; deamido-NAD(+) from nicotinate D-ribonucleotide: step 1/1. Catalyzes the reversible adenylation of nicotinate mononucleotide (NaMN) to nicotinic acid adenine dinucleotide (NaAD). The chain is Probable nicotinate-nucleotide adenylyltransferase from Opitutus terrae (strain DSM 11246 / JCM 15787 / PB90-1).